We begin with the raw amino-acid sequence, 150 residues long: 3-dehydroquinate dehydratase (150 aa).

Tyr26 functions as the Proton acceptor in the catalytic mechanism. Substrate is bound by residues Asn77, His83, and Asp90. Residue His103 is the Proton donor of the active site. Substrate-binding positions include 104–105 (LS) and Arg114.

It belongs to the type-II 3-dehydroquinase family. Homododecamer.

The enzyme catalyses 3-dehydroquinate = 3-dehydroshikimate + H2O. The protein operates within metabolic intermediate biosynthesis; chorismate biosynthesis; chorismate from D-erythrose 4-phosphate and phosphoenolpyruvate: step 3/7. Its function is as follows. Catalyzes a trans-dehydration via an enolate intermediate. In Photobacterium profundum (strain SS9), this protein is 3-dehydroquinate dehydratase.